Here is a 276-residue protein sequence, read N- to C-terminus: NADH-cytochrome b5 reductase 2 (276 aa).

The FAD-binding FR-type domain occupies 15–127 (EAKYPLPLIE…RGPRGRLFYH (113 aa)). N6-acetyllysine is present on Lys17. At Tyr18 the chain carries Phosphotyrosine. Residues 107–137 (ENMKIGETIFFRGPRGRLFYHGPGNLGIRPD) and 146–181 (LADHLGMIAGGTGITPMLQLIRHITKDPSDRTRMSL) each bind FAD.

This sequence belongs to the flavoprotein pyridine nucleotide cytochrome reductase family. The cofactor is FAD. As to expression, restricted expression.

It carries out the reaction 2 Fe(III)-[cytochrome b5] + NADH = 2 Fe(II)-[cytochrome b5] + NAD(+) + H(+). Its function is as follows. NADH-cytochrome b5 reductases are involved in desaturation and elongation of fatty acids, cholesterol biosynthesis, drug metabolism, and, in erythrocyte, methemoglobin reduction. Responsible for NADH-dependent lucigenin chemiluminescence in spermatozoa by reducing both lucigenin and 2-[4-iodophenyl]-3-[4-nitrophenyl]-5-[2,4-disulfophenyl]-2H tetrazolium monosodium salt (WST-1). The sequence is that of NADH-cytochrome b5 reductase 2 from Homo sapiens (Human).